We begin with the raw amino-acid sequence, 375 residues long: 23S rRNA (uracil(747)-C(5))-methyltransferase RlmC (375 aa).

Cysteine 3, cysteine 11, cysteine 14, and cysteine 87 together coordinate [4Fe-4S] cluster. S-adenosyl-L-methionine contacts are provided by glutamine 212, phenylalanine 241, glutamate 262, and asparagine 307. Cysteine 334 functions as the Nucleophile in the catalytic mechanism.

This sequence belongs to the class I-like SAM-binding methyltransferase superfamily. RNA M5U methyltransferase family. RlmC subfamily.

The enzyme catalyses uridine(747) in 23S rRNA + S-adenosyl-L-methionine = 5-methyluridine(747) in 23S rRNA + S-adenosyl-L-homocysteine + H(+). Catalyzes the formation of 5-methyl-uridine at position 747 (m5U747) in 23S rRNA. In Salmonella paratyphi A (strain ATCC 9150 / SARB42), this protein is 23S rRNA (uracil(747)-C(5))-methyltransferase RlmC.